A 130-amino-acid polypeptide reads, in one-letter code: Glycine cleavage system H protein (130 aa).

One can recognise a Lipoyl-binding domain in the interval 22 to 103 (QAWIGISDYA…PYANYIVVVA (82 aa)). Position 63 is an N6-lipoyllysine (Lys-63).

It belongs to the GcvH family. In terms of assembly, the glycine cleavage system is composed of four proteins: P, T, L and H. The cofactor is (R)-lipoate.

Functionally, the glycine cleavage system catalyzes the degradation of glycine. The H protein shuttles the methylamine group of glycine from the P protein to the T protein. The protein is Glycine cleavage system H protein of Syntrophomonas wolfei subsp. wolfei (strain DSM 2245B / Goettingen).